The chain runs to 233 residues: Ribose-5-phosphate isomerase A (233 aa).

Substrate is bound by residues 28-31 (TGST), 85-88 (DGAD), and 98-101 (KGLG). Catalysis depends on Glu-107, which acts as the Proton acceptor. Substrate is bound at residue Lys-125.

It belongs to the ribose 5-phosphate isomerase family. Homodimer.

The catalysed reaction is aldehydo-D-ribose 5-phosphate = D-ribulose 5-phosphate. Its pathway is carbohydrate degradation; pentose phosphate pathway; D-ribose 5-phosphate from D-ribulose 5-phosphate (non-oxidative stage): step 1/1. Catalyzes the reversible conversion of ribose-5-phosphate to ribulose 5-phosphate. This chain is Ribose-5-phosphate isomerase A, found in Roseiflexus sp. (strain RS-1).